The following is a 1170-amino-acid chain: Cellulose synthase-like protein D2 (1170 aa).

Disordered stretches follow at residues Met1 to His48, Ser54 to Glu73, and Asn269 to Ser295. Residues Arg10–Gly24 are compositionally biased toward low complexity. Gly residues predominate over residues Asn273 to Gly288. 2 consecutive transmembrane segments (helical) span residues Val311 to Ala331 and Ala341 to Leu361. Asp441 is a catalytic residue. A coiled-coil region spans residues His527–Lys551. Asp873 is an active-site residue. Helical transmembrane passes span Ile955–Val975, Thr981–Ile1001, Leu1027–Leu1047, Ser1070–Phe1090, Leu1104–Gly1124, and Thr1134–Ile1154.

Belongs to the glycosyltransferase 2 family. Plant cellulose synthase-like D subfamily.

It localises to the golgi apparatus membrane. Functionally, thought to be a Golgi-localized beta-glycan synthase that polymerize the backbones of noncellulosic polysaccharides (hemicelluloses) of plant cell wall. The sequence is that of Cellulose synthase-like protein D2 (CSLD2) from Oryza sativa subsp. japonica (Rice).